The sequence spans 144 residues: uncharacterized protein (144 aa).

An HIT domain is found at 13-120 (IFCGIVEGNV…VPKYETGLGF (108 aa)). A Histidine triad motif motif is present at residues 105-109 (HYHMH).

This is an uncharacterized protein from Mycoplasma pneumoniae (strain ATCC 29342 / M129 / Subtype 1) (Mycoplasmoides pneumoniae).